The following is a 124-amino-acid chain: Fluoride-specific ion channel FluC 2 (124 aa).

The next 4 helical transmembrane spans lie at 9-29 (LGIFLAAMLGGLVRYLVSTWL), 34-54 (DFPWGTLFVNYLGIFCLIYLV), 67-87 (LILALGTGFCGGLTTFSSLML), and 99-119 (LSLILYLLLSIGGGLLLAYYL). Na(+)-binding residues include Gly77 and Thr80.

The protein belongs to the fluoride channel Fluc/FEX (TC 1.A.43) family.

The protein resides in the cell membrane. It catalyses the reaction fluoride(in) = fluoride(out). Its activity is regulated as follows. Na(+) is not transported, but it plays an essential structural role and its presence is essential for fluoride channel function. Functionally, fluoride-specific ion channel. Important for reducing fluoride concentration in the cell, thus reducing its toxicity. This chain is Fluoride-specific ion channel FluC 2, found in Streptococcus pneumoniae serotype 4 (strain ATCC BAA-334 / TIGR4).